Here is a 162-residue protein sequence, read N- to C-terminus: uncharacterized protein (162 aa).

The region spanning 6-78 (LDDLDRNILR…ALIVLEVGKP (73 aa)) is the HTH asnC-type domain. The H-T-H motif DNA-binding region spans 25-44 (ISELSEQLKKPESTIHFRIK).

This is an uncharacterized protein from Pyrococcus furiosus (strain ATCC 43587 / DSM 3638 / JCM 8422 / Vc1).